Reading from the N-terminus, the 510-residue chain is Aspartate kinase FUB3 (510 aa).

ACT domains follow at residues 372–440 (ILSN…VLPD) and 446–510 (LVGA…KNAI).

It belongs to the aspartokinase family.

The enzyme catalyses L-aspartate + ATP = 4-phospho-L-aspartate + ADP. Its pathway is mycotoxin biosynthesis. In terms of biological role, aspartate kinase; part of the gene cluster that mediates the biosynthesis of fusaric acid, a mycotoxin with low to moderate toxicity to animals and humans, but with high phytotoxic properties. L-aspartate is suggested as fusaric acid amino acid precursor that is activated and further processed to O-acetyl-L-homoserine by cluster enzymes aspartate kinase FUB3 and homoserine O-acetyltransferase FUB5, as well as enzymes of the primary metabolism. The polyketide synthase (PKS) FUB1 generates the triketide trans-2-hexenal which is presumptively released by the hydrolase FUB4 and linked to the NRPS-bound amino acid precursor by NAD(P)-dependent dehydrogenase FUB6. FUB1, FUB4, and the non-canonical NRPS Fub8 may form an enzyme complex. Further processing of the NRPS-bound intermediate might be carried out by FUB6 and the sulfhydrylase FUB7, enabling a spontaneous electrocyclization to close the carbon backbone of fusaric acid. Dihydrofusaric acid is likely to be released via reduction by the thioester reductase (TR) domain of FUB8 whereupon the final oxidation to fusaric acid may (also) be performed by the FMN-dependent dehydrogenase FUB9. This Gibberella fujikuroi (strain CBS 195.34 / IMI 58289 / NRRL A-6831) (Bakanae and foot rot disease fungus) protein is Aspartate kinase FUB3.